Reading from the N-terminus, the 617-residue chain is Phosphomethylpyrimidine synthase (617 aa).

Substrate contacts are provided by residues asparagine 230, methionine 259, tyrosine 288, histidine 324, 344–346 (SRG), 385–388 (DGLR), and glutamate 424. Histidine 428 contacts Zn(2+). Tyrosine 451 contributes to the substrate binding site. Zn(2+) is bound at residue histidine 492. Cysteine 572, cysteine 575, and cysteine 580 together coordinate [4Fe-4S] cluster.

Belongs to the ThiC family. As to quaternary structure, homodimer. It depends on [4Fe-4S] cluster as a cofactor.

It catalyses the reaction 5-amino-1-(5-phospho-beta-D-ribosyl)imidazole + S-adenosyl-L-methionine = 4-amino-2-methyl-5-(phosphooxymethyl)pyrimidine + CO + 5'-deoxyadenosine + formate + L-methionine + 3 H(+). It functions in the pathway cofactor biosynthesis; thiamine diphosphate biosynthesis. Functionally, catalyzes the synthesis of the hydroxymethylpyrimidine phosphate (HMP-P) moiety of thiamine from aminoimidazole ribotide (AIR) in a radical S-adenosyl-L-methionine (SAM)-dependent reaction. In Paracidovorax citrulli (strain AAC00-1) (Acidovorax citrulli), this protein is Phosphomethylpyrimidine synthase.